The primary structure comprises 192 residues: Adenylate kinase (192 aa).

10-18 (GVPGVGKTT) serves as a coordination point for ATP.

It belongs to the archaeal adenylate kinase family.

The protein localises to the cytoplasm. It carries out the reaction AMP + ATP = 2 ADP. The protein is Adenylate kinase of Methanoculleus marisnigri (strain ATCC 35101 / DSM 1498 / JR1).